A 298-amino-acid chain; its full sequence is MDKNIIIGAMTALITPFKNGKVDEQSYARLIKRQIENGIDAVVPAGTTGESATLTHEEHRTCIEIAVEICKGTKVKVLAGAGSNATHEAVDLAKFAKEHGADGILSVAPYYNKPTQQGLYEHYKAIAQSVDTPVLLYNVPGRTGCEISTDTIIKLFRDCENIYGVKEASGNIDKCVDLLAHEPRMMLISGEDAINYPILSNGGKGVISVTSNLLPDMISALTHFALDENYKEAKKINDELYNINKILFCESNPIPIKTAMYIAGLIESLEFRLPLCSPSKENFAKIEEVMKKYKIKGF.

Thr48 contributes to the pyruvate binding site. Tyr137 acts as the Proton donor/acceptor in catalysis. Lys166 acts as the Schiff-base intermediate with substrate in catalysis. A pyruvate-binding site is contributed by Ile207.

Belongs to the DapA family. Homotetramer; dimer of dimers.

It is found in the cytoplasm. The catalysed reaction is L-aspartate 4-semialdehyde + pyruvate = (2S,4S)-4-hydroxy-2,3,4,5-tetrahydrodipicolinate + H2O + H(+). The protein operates within amino-acid biosynthesis; L-lysine biosynthesis via DAP pathway; (S)-tetrahydrodipicolinate from L-aspartate: step 3/4. In terms of biological role, catalyzes the condensation of (S)-aspartate-beta-semialdehyde [(S)-ASA] and pyruvate to 4-hydroxy-tetrahydrodipicolinate (HTPA). The sequence is that of 4-hydroxy-tetrahydrodipicolinate synthase from Campylobacter jejuni subsp. doylei (strain ATCC BAA-1458 / RM4099 / 269.97).